The sequence spans 398 residues: Signal-regulatory protein beta-1 isoform 3 (398 aa).

An N-terminal signal peptide occupies residues 1–29; the sequence is MPVPASWPHLPSPFLLMTLLLGRLTGVAG. Residues 30 to 371 lie on the Extracellular side of the membrane; that stretch reads EEELQVIQPD…GPALASAAPL (342 aa). An Ig-like V-type domain is found at 31-136; that stretch reads EELQVIQPDK…SPDHVEFKSG (106 aa). Intrachain disulfides connect cysteine 54/cysteine 120 and cysteine 169/cysteine 227. Ig-like C1-type domains are found at residues 147–246 and 253–347; these read PSAP…ANLS and PTLE…HDLK. 3 N-linked (GlcNAc...) asparagine glycosylation sites follow: asparagine 244, asparagine 291, and asparagine 318. Cysteine 272 and cysteine 330 are disulfide-bonded. Basic and acidic residues predominate over residues 337–354; that stretch reads QPAVSKSHDLKVSAHPKE. The disordered stretch occupies residues 337–361; sequence QPAVSKSHDLKVSAHPKEQGSNTAP. The chain crosses the membrane as a helical span at residues 372–392; sequence LIAFLLGPKVLLVVGVSVIYV. Residues 393 to 398 lie on the Cytoplasmic side of the membrane; that stretch reads YWKQKA.

The protein resides in the membrane. Immunoglobulin-like cell surface receptor involved in the negative regulation of receptor tyrosine kinase-coupled signaling processes. The sequence is that of Signal-regulatory protein beta-1 isoform 3 (SIRPB1) from Homo sapiens (Human).